Reading from the N-terminus, the 217-residue chain is Adenylate kinase (217 aa).

An ATP-binding site is contributed by 10–15 (GAGKGT). The tract at residues 30–59 (STGDLFRANISQQTELGKLAKSYMNAGNLV) is NMP. AMP contacts are provided by residues T31, R36, 57 to 59 (NLV), 85 to 88 (GFPR), and Q92. Residues 126-164 (GRRVCRNEPKHVFHVTYTPPKKEGVCDVCGGELYQRDDD) form an LID region. ATP contacts are provided by residues R127 and 137–138 (VF). Residues R161 and R172 each coordinate AMP. Residue G200 participates in ATP binding.

The protein belongs to the adenylate kinase family. In terms of assembly, monomer.

The protein resides in the cytoplasm. It carries out the reaction AMP + ATP = 2 ADP. Its pathway is purine metabolism; AMP biosynthesis via salvage pathway; AMP from ADP: step 1/1. Its function is as follows. Catalyzes the reversible transfer of the terminal phosphate group between ATP and AMP. Plays an important role in cellular energy homeostasis and in adenine nucleotide metabolism. The protein is Adenylate kinase of Streptomyces coelicolor (strain ATCC BAA-471 / A3(2) / M145).